The primary structure comprises 192 residues: Probable GTP-binding protein EngB (192 aa).

Residues 22–192 (QIPEIVFAGR…LLAHLAQYIR (171 aa)) enclose the EngB-type G domain. GTP-binding positions include 30-37 (GRSNVGKS), 57-61 (GKTRL), 75-78 (DLPG), 142-145 (TKDD), and 172-174 (YSS). Mg(2+)-binding residues include S37 and T59.

This sequence belongs to the TRAFAC class TrmE-Era-EngA-EngB-Septin-like GTPase superfamily. EngB GTPase family. It depends on Mg(2+) as a cofactor.

Its function is as follows. Necessary for normal cell division and for the maintenance of normal septation. In Chlorobium phaeobacteroides (strain DSM 266 / SMG 266 / 2430), this protein is Probable GTP-binding protein EngB.